A 283-amino-acid polypeptide reads, in one-letter code: Pantothenate synthetase (283 aa).

Residue 30 to 37 (MGYYHAGH) participates in ATP binding. The Proton donor role is filled by His-37. Residue Gln-61 coordinates (R)-pantoate. Gln-61 lines the beta-alanine pocket. Residue 147–150 (GQKD) participates in ATP binding. Residue Gln-153 coordinates (R)-pantoate. ATP-binding positions include Val-176 and 184-187 (MSSR).

The protein belongs to the pantothenate synthetase family. As to quaternary structure, homodimer.

Its subcellular location is the cytoplasm. It carries out the reaction (R)-pantoate + beta-alanine + ATP = (R)-pantothenate + AMP + diphosphate + H(+). Its pathway is cofactor biosynthesis; (R)-pantothenate biosynthesis; (R)-pantothenate from (R)-pantoate and beta-alanine: step 1/1. Functionally, catalyzes the condensation of pantoate with beta-alanine in an ATP-dependent reaction via a pantoyl-adenylate intermediate. In Nitratidesulfovibrio vulgaris (strain ATCC 29579 / DSM 644 / CCUG 34227 / NCIMB 8303 / VKM B-1760 / Hildenborough) (Desulfovibrio vulgaris), this protein is Pantothenate synthetase.